Consider the following 95-residue polypeptide: RING finger protein Z (95 aa).

Gly2 carries the N-myristoyl glycine; by host lipid modification. Residues 38-74 (CKSCWFANRGLIACSDHYLCLNCLTRLRSQSQFCGIC) form an RING-type; atypical zinc finger. The PTAP/PSAP motif motif lies at 88-91 (PSAP).

The protein belongs to the arenaviridae Z protein family. Interacts with protein NP; this interaction probably directs the encapsidated genome to budding sites. Interacts (via RING domain) with polymerase L; this interaction inhibits viral transcription and replication, Z partially blocks the product exit tunnel for the releasing nascent RNA product. Interacts with the glycoprotein complex; this interaction plays a role in virion budding. Interacts with host eIF4E; this interaction results in eIF4E reduced affinity for its substrate, the 5'-m7 G cap structure. Interacts (via late-budding domain) with host TSG101; this interaction is essential for budding and release of viral particles. Interacts with host RPLP0; this interaction may serve to load ribosome-like particles inside the virion. Interacts with host PML; this interaction induces PML bodies redistribution in the cytoplasm upon viral infection. In terms of processing, myristoylation is required for the role of RING finger protein Z in assembly and budding.

The protein localises to the virion. It localises to the host cytoplasm. Its subcellular location is the host perinuclear region. It is found in the host cell membrane. Functionally, plays a crucial role in virion assembly and budding. Expressed late in the virus life cycle, it acts as an inhibitor of viral transcription and RNA synthesis by interacting with the viral polymerase L. Presumably recruits the NP encapsidated genome to cellular membranes at budding sites via direct interaction with NP. Plays critical roles in the final steps of viral release by interacting with host TSG101, a member of the vacuolar protein-sorting pathway and using other cellular host proteins involved in vesicle formation pathway. The budding of the virus progeny occurs after association of protein Z with the viral glycoprotein complex SSP-GP1-GP2 at the cell periphery, step that requires myristoylation of protein Z. Also selectively represses protein production by associating with host eIF4E. In cell-based minigenome assay, has an inhibitory effect on the ribonucleoprotein machinery (vRNP), which is responsible for the replication and transcription of the viral genome. This Pirital mammarenavirus (isolate Rat/Venezuela/VAV-488/1995) (PIRV) protein is RING finger protein Z.